The sequence spans 143 residues: Dehydrin DHN2 (143 aa).

The segment covering 1–10 has biased composition (polar residues); it reads MEYQGQTGHA. Positions 1 to 143 are disordered; sequence MEYQGQTGHA…IKEKLPGGQH (143 aa). Residues 24–34 show a composition bias toward gly residues; sequence GHGGATGGPTG. Residues 35–46 show a composition bias toward low complexity; sequence THGAAAAAAGTG. Basic and acidic residues predominate over residues 51 to 61; that stretch reads TRDDHKTDGVL. The span at 62 to 71 shows a compositional bias: low complexity; sequence RRSGSSSSSS. Over residues 86-101 the composition is skewed to basic and acidic residues; that stretch reads KEKIKEKLPGGAHKDA. Positions 109-123 are enriched in low complexity; that stretch reads AAGEYAGTGTHGAEA. Over residues 124–143 the composition is skewed to basic and acidic residues; sequence TGEKKGVMDKIKEKLPGGQH.

This sequence belongs to the plant dehydrin family.

The sequence is that of Dehydrin DHN2 (DHN2) from Hordeum vulgare (Barley).